The sequence spans 543 residues: Glutamyl-tRNA(Gln) amidotransferase subunit A, chloroplastic/mitochondrial (543 aa).

Active-site charge relay system residues include lysine 123 and serine 198. Residue serine 222 is the Acyl-ester intermediate of the active site.

Belongs to the amidase family. GatA subfamily. Subunit of the heterotrimeric GatCAB amidotransferase (AdT) complex, composed of A, B and C subunits.

The protein resides in the mitochondrion. It is found in the plastid. It localises to the chloroplast stroma. The catalysed reaction is L-glutamyl-tRNA(Gln) + L-glutamine + ATP + H2O = L-glutaminyl-tRNA(Gln) + L-glutamate + ADP + phosphate + H(+). Functionally, allows the formation of correctly charged Gln-tRNA(Gln) through the transamidation of misacylated Glu-tRNA(Gln) in chloroplasts and mitochondria. The reaction takes place in the presence of glutamine and ATP through an activated gamma-phospho-Glu-tRNA(Gln). This chain is Glutamyl-tRNA(Gln) amidotransferase subunit A, chloroplastic/mitochondrial, found in Oryza sativa subsp. indica (Rice).